The following is a 178-amino-acid chain: Cytochrome b6-f complex iron-sulfur subunit (178 aa).

A helical transmembrane segment spans residues 20–42 (LLTFGTATGVALGALYPVANYFM). Residues 65–161 (KTGWLATHQA…VDIEDDAVLV (97 aa)) form the Rieske domain. [2Fe-2S] cluster contacts are provided by cysteine 107, histidine 109, cysteine 125, and histidine 128. A disulfide bond links cysteine 112 and cysteine 127.

The protein belongs to the Rieske iron-sulfur protein family. The 4 large subunits of the cytochrome b6-f complex are cytochrome b6, subunit IV (17 kDa polypeptide, PetD), cytochrome f and the Rieske protein, while the 4 small subunits are PetG, PetL, PetM and PetN. The complex functions as a dimer. The cofactor is [2Fe-2S] cluster.

It localises to the cellular thylakoid membrane. The catalysed reaction is 2 oxidized [plastocyanin] + a plastoquinol + 2 H(+)(in) = 2 reduced [plastocyanin] + a plastoquinone + 4 H(+)(out). Functionally, component of the cytochrome b6-f complex, which mediates electron transfer between photosystem II (PSII) and photosystem I (PSI), cyclic electron flow around PSI, and state transitions. This Prochlorococcus marinus (strain AS9601) protein is Cytochrome b6-f complex iron-sulfur subunit.